The sequence spans 1508 residues: Gem-associated protein 5 (1508 aa).

The interval 1–124 (MGQEPRTLPP…LHWSPRVKDL (124 aa)) is important for interaction with U1 snRNA. The segment at 13–15 (NWY) is interaction with U4 snRNA. Ser-48 carries the post-translational modification Phosphoserine. Position 51 is a phosphothreonine (Thr-51). WD repeat units follow at residues 62–104 (GHTE…VVTE), 107–148 (LHQH…QHLF), 150–189 (EPRT…EVIH), 193–264 (GHDD…GVMI), 280–321 (TVKE…RRKY), 333–374 (HSRI…CSWT), 377–417 (SLGG…NNYD), 424–464 (GVKS…PPQI), 468–509 (YHKK…IVLQ), 533–573 (KYKL…LICT), and 576–622 (QHHK…ESSP). Position 624 is a phosphoserine (Ser-624). 2 WD repeats span residues 637 to 677 (GHTA…PLCN) and 680 to 720 (GHRG…HSRP). The interval 715–790 (QDHSRPPQGK…EGEEQAREPE (76 aa)) is disordered. A compositionally biased stretch (basic residues) spans 739 to 748 (AKPKKKKKPT). The residue at position 751 (Thr-751) is a Phosphothreonine. A Glycyl lysine isopeptide (Lys-Gly) (interchain with G-Cter in SUMO2) cross-link involves residue Lys-754. Phosphoserine occurs at positions 757, 770, 778, and 847. 2 disordered regions span residues 1313–1343 (EPSQ…ELDL) and 1389–1428 (QKSQ…KNEP). The stretch at 1362–1393 (EKHASLQNSQRTVAEVQETLAEMIRQHQKSQL) forms a coiled coil. Positions 1390–1399 (KSQLCKSTAN) are enriched in polar residues.

It belongs to the WD repeat gemin-5 family. In terms of assembly, part of the core SMN complex that contains SMN1, GEMIN2/SIP1, DDX20/GEMIN3, GEMIN4, GEMIN5, GEMIN6, GEMIN7, GEMIN8 and STRAP/UNRIP. Part of the SMN-Sm complex that contains SMN1, GEMIN2/SIP1, DDX20/GEMIN3, GEMIN4, GEMIN5, GEMIN6, GEMIN7, GEMIN8, STRAP/UNRIP and the Sm proteins SNRPB, SNRPD1, SNRPD2, SNRPD3, SNRPE, SNRPF and SNRPG. Interacts with GEMIN2; the interaction is direct. Interacts with SMN1, SNRPB, SNRPD1, SNRPD2, SNRPD3 and SNRPE; the interaction is direct. Interacts with cytosolic DDX20/GEMIN3 and GEMIN4. Interacts with SNRNP70 and HNRNPU. Identified in a complex with 80S ribosomes; binds to the 60S large ribosomal subunit. Interacts with the ribosomal subunits RPL3 and RPL4.

Its subcellular location is the nucleus. It is found in the nucleoplasm. The protein localises to the gem. It localises to the cytoplasm. Its function is as follows. The SMN complex catalyzes the assembly of small nuclear ribonucleoproteins (snRNPs), the building blocks of the spliceosome, and thereby plays an important role in the splicing of cellular pre-mRNAs. Most spliceosomal snRNPs contain a common set of Sm proteins SNRPB, SNRPD1, SNRPD2, SNRPD3, SNRPE, SNRPF and SNRPG that assemble in a heptameric protein ring on the Sm site of the small nuclear RNA to form the core snRNP (Sm core). In the cytosol, the Sm proteins SNRPD1, SNRPD2, SNRPE, SNRPF and SNRPG are trapped in an inactive 6S pICln-Sm complex by the chaperone CLNS1A that controls the assembly of the core snRNP. To assemble core snRNPs, the SMN complex accepts the trapped 5Sm proteins from CLNS1A forming an intermediate. Binding of snRNA inside 5Sm ultimately triggers eviction of the SMN complex, thereby allowing binding of SNRPD3 and SNRPB to complete assembly of the core snRNP. Within the SMN complex, GEMIN5 recognizes and delivers the small nuclear RNAs (snRNAs) to the SMN complex. Binds to the 7-methylguanosine cap of RNA molecules. Binds to the 3'-UTR of SMN1 mRNA and regulates its translation; does not affect mRNA stability. May play a role in the regulation of protein synthesis via its interaction with ribosomes. The chain is Gem-associated protein 5 (GEMIN5) from Homo sapiens (Human).